Here is a 371-residue protein sequence, read N- to C-terminus: Cytochrome b (371 aa).

The next 8 helical transmembrane spans lie at 25–45 (FGSMLLACSSMQVLTGFFLAV), 69–90 (WMMQNLHAIGASMFFICIYIHI), 105–125 (WLSGTTLLIMLMVTAFFGXXX), 170–190 (XXXXXXXXXXXXXXXXXXXXX), 218–238 (YKDLLMLSLMVLMLLMTVSFL), 280–300 (LGGALALAMSIMILLTVPFTH), 312–332 (IMQLMFWTLVATFMVITWAAT), and 339–358 (FTMISQIASTIYFLFFIMNP). 2 residues coordinate heme b: histidine 75 and histidine 89. Residues residue 174 and residue 188 each coordinate heme b.

This sequence belongs to the cytochrome b family. The cytochrome bc1 complex contains 3 respiratory subunits (MT-CYB, CYC1 and UQCRFS1), 2 core proteins (UQCRC1 and UQCRC2) and probably 6 low-molecular weight proteins. Heme b serves as cofactor.

Its subcellular location is the mitochondrion inner membrane. Functionally, component of the ubiquinol-cytochrome c reductase complex (complex III or cytochrome b-c1 complex) that is part of the mitochondrial respiratory chain. The b-c1 complex mediates electron transfer from ubiquinol to cytochrome c. Contributes to the generation of a proton gradient across the mitochondrial membrane that is then used for ATP synthesis. This Eryx tataricus (Tartar sand boa) protein is Cytochrome b (MT-CYB).